The following is a 204-amino-acid chain: Putative glutathione S-transferase alpha-3 (204 aa).

T2 is modified (N-acetylthreonine). One can recognise a GST N-terminal domain in the interval 2–79 (TKPQLSYFKV…YIASQHDFVG (78 aa)). Residues Y8, 49–50 (QL), and 63–64 (QS) contribute to the glutathione site. The GST C-terminal domain maps to 81-202 (TPEEKALVDE…YLKNRPITER (122 aa)).

The protein belongs to the GST superfamily. Alpha family.

The enzyme catalyses RX + glutathione = an S-substituted glutathione + a halide anion + H(+). In terms of biological role, conjugation of reduced glutathione to a wide number of exogenous and endogenous hydrophobic electrophiles. The chain is Putative glutathione S-transferase alpha-3 (gsta3) from Dictyostelium discoideum (Social amoeba).